A 190-amino-acid polypeptide reads, in one-letter code: Potassium-transporting ATPase KdpC subunit (190 aa).

A helical transmembrane segment spans residues 13–33 (LLLILTLITGILYPIVTTGFA).

The protein belongs to the KdpC family. In terms of assembly, the system is composed of three essential subunits: KdpA, KdpB and KdpC.

The protein localises to the cell inner membrane. Functionally, part of the high-affinity ATP-driven potassium transport (or Kdp) system, which catalyzes the hydrolysis of ATP coupled with the electrogenic transport of potassium into the cytoplasm. This subunit acts as a catalytic chaperone that increases the ATP-binding affinity of the ATP-hydrolyzing subunit KdpB by the formation of a transient KdpB/KdpC/ATP ternary complex. The chain is Potassium-transporting ATPase KdpC subunit from Leptospira interrogans serogroup Icterohaemorrhagiae serovar copenhageni (strain Fiocruz L1-130).